Here is a 156-residue protein sequence, read N- to C-terminus: MSRKNQAPKREVLPDPLYNSKIVTRLINRVMLDGKRGTAATIVYDAFNAIKEATGNDALEVFETAMDNIMPVLEVRARRVGGSNYQVPVEVRPERRTTLGLRWLVNASRARGEHTMKDRLAKEIMDAANNTGASVKKREDTHKMAEANRAFAHFRW.

Belongs to the universal ribosomal protein uS7 family. As to quaternary structure, part of the 30S ribosomal subunit. Contacts proteins S9 and S11.

One of the primary rRNA binding proteins, it binds directly to 16S rRNA where it nucleates assembly of the head domain of the 30S subunit. Is located at the subunit interface close to the decoding center, probably blocks exit of the E-site tRNA. The polypeptide is Small ribosomal subunit protein uS7 (Streptococcus pyogenes serotype M1).